A 596-amino-acid chain; its full sequence is Zinc finger CCCH domain-containing protein 64 (596 aa).

Disordered regions lie at residues 243-263 (LSPTPTSTMSPAELSAKPPKT) and 272-291 (DGAAESKKRPNDSDSDSQYW). 2 C3H1-type zinc fingers span residues 303–331 (SQGEKLCFKFVCSGSCPRGEDCHFQHNAE) and 335–363 (QCRRGVCLDLIIKGKCEKGPECSYKHEFQ).

The chain is Zinc finger CCCH domain-containing protein 64 from Arabidopsis thaliana (Mouse-ear cress).